The chain runs to 97 residues: MSRKCELTGVSVLYGNNVSHSQRKTRRRFEPNLRSVKFRSDITDEVYRLSVNARCIRSVEKAGGFDEYILKANNDVLSSTARAIKQKIIDIKAVESL.

It belongs to the bacterial ribosomal protein bL28 family.

The protein is Large ribosomal subunit protein bL28 of Rickettsia typhi (strain ATCC VR-144 / Wilmington).